A 433-amino-acid polypeptide reads, in one-letter code: MAFEFRLPDIGEGIHEGEIVKWFIKAGDTIEEDDVLAEVQNDKSVVEIPSPVSGTVEEVLVDEGTVAVVGDVIVKIDAPDAEEMQFKGHGDDEDSKKEEKEQESPVQEEASSTQSQEKTEVDESKTVKAMPSVRKYARENGVNIKAVNGSGKNGRITKEDIDAYLNGGSSEEGSNTSAASESTSSDVVNASATQALPEGDFPETTEKIPAMRKAIAKAMVNSKHTAPHVTLMDEIDVQELWDHRKKFKEIAAEQGTKLTFLPYVVKALVSALKKYPALNTSFNEEAGEVVHKHYWNIGIAADTDKGLLVPVVKHADRKSIFEISDEINELAVKARDGKLTSEEMKGATCTISNIGSAGGQWFTPVINHPEVAILGIGRIAQKPIVKDGEIVAAPVLALSLSFDHRQIDGATGQNAMNHIKRLLNNPELLLMEG.

Residues 2-77 (AFEFRLPDIG…VVGDVIVKID (76 aa)) form the Lipoyl-binding domain. Position 43 is an N6-lipoyllysine (Lys43). 2 disordered regions span residues 80–134 (DAEE…PSVR) and 164–204 (YLNG…FPET). Composition is skewed to basic and acidic residues over residues 84–103 (MQFKGHGDDEDSKKEEKEQE) and 117–126 (EKTEVDESKT). One can recognise a Peripheral subunit-binding (PSBD) domain in the interval 128 to 165 (KAMPSVRKYARENGVNIKAVNGSGKNGRITKEDIDAYL). Positions 166-185 (NGGSSEEGSNTSAASESTSS) are enriched in low complexity. His404 is a catalytic residue.

This sequence belongs to the 2-oxoacid dehydrogenase family. Forms a 24-polypeptide structural core with octahedral symmetry. Requires (R)-lipoate as cofactor.

The enzyme catalyses N(6)-[(R)-dihydrolipoyl]-L-lysyl-[protein] + acetyl-CoA = N(6)-[(R)-S(8)-acetyldihydrolipoyl]-L-lysyl-[protein] + CoA. Functionally, the pyruvate dehydrogenase complex catalyzes the overall conversion of pyruvate to acetyl-CoA and CO(2). It contains multiple copies of three enzymatic components: pyruvate dehydrogenase (E1), dihydrolipoamide acetyltransferase (E2) and lipoamide dehydrogenase (E3). The sequence is that of Dihydrolipoyllysine-residue acetyltransferase component of pyruvate dehydrogenase complex (pdhC) from Staphylococcus epidermidis (strain ATCC 35984 / DSM 28319 / BCRC 17069 / CCUG 31568 / BM 3577 / RP62A).